The primary structure comprises 189 residues: Protein sisterless A (189 aa).

Positions 93–124 are disordered; that stretch reads DCRGSGSGSGSGSGSDVKDAQRQRAESCRKSR. Residues 108–121 are compositionally biased toward basic and acidic residues; it reads DVKDAQRQRAESCR.

Homodimer. Interacts with dpn (via bHLH motif). Interacts with da (via bHLH motif). Interacts with Bap60. In terms of tissue distribution, localizes to all the embryonic nuclei until nuclear cycle 9, when expression ceases in the prepole cell nuclei. Associates with the somatic nuclei through cycle 10. By nuclear cycle 12, distributes uniformly in the somatic portion of the embryo and no longer associates with the nuclei. After early cycle 14 (beginning of cellularization) there is very little or no expression in the periphery of the embryo or in either the somatic or germ cells. In the yolk, accumulates at the nuclei from nuclear cycle 8 until 10-11 hours after fertilization.

It is found in the nucleus. Involved in sex determination and dosage compensation. Required for proper expression of Sxl in embryonic somatic cells. Also has an essential function in the yolk nuclei. Involved in endoderm migration and midgut formation. In Drosophila melanogaster (Fruit fly), this protein is Protein sisterless A (sisA).